The following is a 323-amino-acid chain: Dof zinc finger protein DOF3.6 (323 aa).

A Dof-type zinc finger spans residues 76–130 (LNCPRCDSTNTKFCYFNNYSLTQPRHFCKTCRRYWTRGGSLRNVPVGGGFRRNKR). 4 residues coordinate Zn(2+): C78, C81, C103, and C106. Disordered regions lie at residues 121–160 (VGGGFRRNKRSKSRSKSTVVVSTDNTTSTSSLTSRPSYSN) and 304–323 (GGNSSWTGFTSNNSTGHLSF). A compositionally biased stretch (basic residues) spans 126-135 (RRNKRSKSRS). Residues 136-159 (KSTVVVSTDNTTSTSSLTSRPSYS) are compositionally biased toward low complexity.

Interacts with OBF4. In terms of tissue distribution, predominantly expressed in roots.

The protein resides in the nucleus. Transcription factor that binds specifically to a 5'-AA[AG]G-3' consensus core sequence. Enhances the DNA binding of OBF transcription factors to OCS elements. This is Dof zinc finger protein DOF3.6 (DOF3.6) from Arabidopsis thaliana (Mouse-ear cress).